Consider the following 378-residue polypeptide: UDP-N-acetylglucosamine 2-epimerase (378 aa).

Residue His-214 is part of the active site.

It belongs to the UDP-N-acetylglucosamine 2-epimerase family.

The enzyme catalyses UDP-N-acetyl-alpha-D-glucosamine = UDP-N-acetyl-alpha-D-mannosamine. It functions in the pathway bacterial outer membrane biogenesis; LPS O-antigen biosynthesis. The sequence is that of UDP-N-acetylglucosamine 2-epimerase (rfbC) from Salmonella borreze.